The following is a 747-amino-acid chain: MGDVLSTHLDDARRQNIAEKTEKILREFLRFYEDQYGVSLFNSMRHEIEGTGPPQAQLLWRKVPLDERIIFSGNLFQYQEDNKKWRNRFSLVPHNYGLVLYENKVAYERQIPPRAVINSAGYKVLTSLDQYLELVGNSLPGTTSKSGSTPILKCPTQFPLILWHPYARHYYFCMMTEAEQDKWQAVLQDCVRHCNNGIPENSKVEGPAFTDAIRMYRQSKEQYGTWEMLCGNEVQILSNLVMEELGPALKTELGPRLKGKPQERQRQWIQISDAVYRLVFEQAKVHFEEVLCKLQLARPAMEAVIRTDMDQIITSKEHLASKIRAFILPKAEVCVRNHVQPYIPSILEALMVPTSQGFTEVRDVFFKEVTDMNLNVINEGGIDKLGEYMEKLSQLAYHPLKMQSCYEKMEPLRLDGLQQRFDVSSTSVFKQRAQIHMREQMDNAVYTFETLLHQELGKGPTKEELCKSIQRILERVLKKYDYDSSSVRKRFFREALLQITIPFLLKKLAPTCKSELPRFQELIFEDFARFILVENTYEEVVLQTVMKDILQAVKEAAVQRKHNLYRDSVVLHNSDPNLHLLAEGAPIDWGEQYGDGGDGSDSGGSPCPSEAATLTEKRRRAKQVVSVVQDEESGLPFEAGSEPPSPASPDNVTELRGLLAQDLQAESSPPASPLLNGAPVQESPQPMTVLEASPPASPLRHLPPGKAVDLEPPKPSDQETGEKVSSPGSRPPIHTTTEDSAGVQTEF.

Residue glycine 2 is the site of N-myristoyl glycine attachment. The 125-residue stretch at arginine 68–arginine 192 folds into the PH domain. Serine 568 and serine 574 each carry phosphoserine. The tract at residues tryptophan 589–phenylalanine 747 is disordered. A compositionally biased stretch (gly residues) spans tyrosine 593–serine 602. 10 positions are modified to phosphoserine: serine 605, serine 626, serine 641, serine 645, serine 648, serine 667, serine 672, serine 683, serine 693, and serine 697. Positions valine 708 to glutamate 722 are enriched in basic and acidic residues. Over residues histidine 734 to phenylalanine 747 the composition is skewed to polar residues.

It belongs to the Niban family. Post-translationally, as apoptosis proceeds, degraded via an proteasome-independent pathway, probably by caspases.

Its subcellular location is the cytoplasm. It is found in the cytosol. It localises to the cell junction. The protein resides in the adherens junction. The protein localises to the membrane. Functionally, may play a role in apoptosis suppression. The protein is Protein Niban 2 of Rattus norvegicus (Rat).